We begin with the raw amino-acid sequence, 179 residues long: UPF0302 protein BPUM_1989 (179 aa).

This sequence belongs to the UPF0302 family.

The sequence is that of UPF0302 protein BPUM_1989 from Bacillus pumilus (strain SAFR-032).